Reading from the N-terminus, the 234-residue chain is 2-C-methyl-D-erythritol 4-phosphate cytidylyltransferase (234 aa).

The protein belongs to the IspD/TarI cytidylyltransferase family. IspD subfamily.

The catalysed reaction is 2-C-methyl-D-erythritol 4-phosphate + CTP + H(+) = 4-CDP-2-C-methyl-D-erythritol + diphosphate. Its pathway is isoprenoid biosynthesis; isopentenyl diphosphate biosynthesis via DXP pathway; isopentenyl diphosphate from 1-deoxy-D-xylulose 5-phosphate: step 2/6. In terms of biological role, catalyzes the formation of 4-diphosphocytidyl-2-C-methyl-D-erythritol from CTP and 2-C-methyl-D-erythritol 4-phosphate (MEP). This is 2-C-methyl-D-erythritol 4-phosphate cytidylyltransferase from Pseudomonas aeruginosa (strain ATCC 15692 / DSM 22644 / CIP 104116 / JCM 14847 / LMG 12228 / 1C / PRS 101 / PAO1).